The chain runs to 162 residues: Caveolin-2 (162 aa).

Residues 1-86 (MGLETEKADV…FEISKYVVYK (86 aa)) are Cytoplasmic-facing. Position 19 is a phosphotyrosine; by SRC (Tyr19). Phosphoserine occurs at positions 20 and 23. At Tyr27 the chain carries Phosphotyrosine; by SRC. Residue Ser36 is modified to Phosphoserine. Positions 87–107 (FLTVFLAIPLAFAAGILFATL) form an intramembrane region, helical. Residues 108 to 162 (SCLHIWIIMPFVKTCLMVLPSVQTVWKTVTDVVIAPLCASVGRSFSSVSLQLSHD) are Cytoplasmic-facing.

It belongs to the caveolin family. Monomer or homodimer. Interacts with CAV1; the interaction forms a stable heterooligomeric complex that is required for targeting to lipid rafts and for caveolae formation. Tyrosine phosphorylated forms do not form heterooligomers with the Tyr-19-phosphorylated form existing as a monomer or dimer, and the Tyr-27-form as a monomer only. Interacts (tyrosine phosphorylated form) with the SH2 domain-containing proteins, RASA1, NCK1 and SRC. Interacts (tyrosine phosphorylated form) with INSR, the interaction (Tyr-27-phosphorylated form) is increased on insulin stimulation. Interacts (Tyr-19 phosphorylated form) with MAPK1 (phosphorylated form); the interaction, promoted by insulin, leads to nuclear location and MAPK1 activation. Interacts with STAT3; the interaction is increased on insulin-induced tyrosine phosphorylation leading to STAT activation. Phosphorylated on serine and tyrosine residues. CAV1 promotes phosphorylation on Ser-23 which then targets the complex to the plasma membrane, lipid rafts and caveolae. Phosphorylation on Ser-36 appears to modulate mitosis in endothelial cells. Phosphorylation on both Tyr-19 and Tyr-27 is required for insulin-induced 'Ser-727' phosphorylation of STAT3 and its activation. Phosphorylation on Tyr-19 is required for insulin-induced phosphorylation of MAPK1 and DNA binding of STAT3. Tyrosine phosphorylation is induced by both EGF and insulin (By. similarity).

It is found in the nucleus. The protein resides in the cytoplasm. Its subcellular location is the golgi apparatus membrane. The protein localises to the cell membrane. It localises to the membrane. It is found in the caveola. Its function is as follows. May act as a scaffolding protein within caveolar membranes. Interacts directly with G-protein alpha subunits and can functionally regulate their activity. Acts as an accessory protein in conjunction with CAV1 in targeting to lipid rafts and driving caveolae formation. The Ser-36 phosphorylated form has a role in modulating mitosis in endothelial cells. Positive regulator of cellular mitogenesis of the MAPK signaling pathway. Required for the insulin-stimulated nuclear translocation and activation of MAPK1 and STAT3, and the subsequent regulation of cell cycle progression. The polypeptide is Caveolin-2 (CAV2) (Loxodonta africana (African elephant)).